The chain runs to 298 residues: HTH-type transcriptional regulator TsaR (298 aa).

Residues 1-58 (MKLQTLQALICIEEVGSLRAAAQLLHLSQPALSAAIQQLEDELKAPLLVRTKRGVSLT) form the HTH lysR-type domain. The segment at residues 18-37 (LRAAAQLLHLSQPALSAAIQ) is a DNA-binding region (H-T-H motif). Ser-98 and Ala-100 together coordinate toluene-4-sulfonate.

The protein belongs to the LysR transcriptional regulatory family. As to quaternary structure, homotetramer. Dimer of dimers related by a twofold axis.

Sensitive to oxygen. Its function is as follows. Regulates expression of the tsaMBCD1 operon and of tsaT in response to p-toluenesulfonate (TSA). Acts by binding directly to the promoter region. Binding to the tsa promoter depends on TSA concentration. This chain is HTH-type transcriptional regulator TsaR (tsaR), found in Comamonas testosteroni (Pseudomonas testosteroni).